Reading from the N-terminus, the 529-residue chain is GMP synthase [glutamine-hydrolyzing] (529 aa).

The 190-residue stretch at 17-206 (TILVLDFGSQ…AIDICQASNN (190 aa)) folds into the Glutamine amidotransferase type-1 domain. The active-site Nucleophile is cysteine 93. Residues histidine 180 and glutamate 182 contribute to the active site. Residues 207–404 (WTMENFIDTE…MGVPHDLVWR (198 aa)) enclose the GMPS ATP-PPase domain. Residue 235–241 (SGGVDST) participates in ATP binding. Residues arginine 308, aspartate 466, lysine 521, and glutamate 527 each contribute to the XMP site.

As to quaternary structure, homodimer. The cofactor is Mg(2+).

It is found in the cytoplasm. The protein resides in the cytosol. The enzyme catalyses XMP + L-glutamine + ATP + H2O = GMP + L-glutamate + AMP + diphosphate + 2 H(+). Its pathway is purine metabolism; GMP biosynthesis; GMP from XMP (L-Gln route): step 1/1. Functionally, catalyzes the conversion of xanthine monophosphate (XMP) to GMP in the presence of glutamine and ATP through an adenyl-XMP intermediate. The protein is GMP synthase [glutamine-hydrolyzing] (GUA1) of Debaryomyces hansenii (strain ATCC 36239 / CBS 767 / BCRC 21394 / JCM 1990 / NBRC 0083 / IGC 2968) (Yeast).